The primary structure comprises 105 residues: Large ribosomal subunit protein uL24 (105 aa).

It belongs to the universal ribosomal protein uL24 family. Part of the 50S ribosomal subunit.

One of two assembly initiator proteins, it binds directly to the 5'-end of the 23S rRNA, where it nucleates assembly of the 50S subunit. Its function is as follows. One of the proteins that surrounds the polypeptide exit tunnel on the outside of the subunit. The protein is Large ribosomal subunit protein uL24 of Lachnoclostridium phytofermentans (strain ATCC 700394 / DSM 18823 / ISDg) (Clostridium phytofermentans).